Reading from the N-terminus, the 300-residue chain is tRNA-cytidine(32) 2-sulfurtransferase (300 aa).

The PP-loop motif motif lies at S41–S46. Positions 116, 119, and 207 each coordinate [4Fe-4S] cluster.

The protein belongs to the TtcA family. Homodimer. Mg(2+) is required as a cofactor. It depends on [4Fe-4S] cluster as a cofactor.

The protein localises to the cytoplasm. The enzyme catalyses cytidine(32) in tRNA + S-sulfanyl-L-cysteinyl-[cysteine desulfurase] + AH2 + ATP = 2-thiocytidine(32) in tRNA + L-cysteinyl-[cysteine desulfurase] + A + AMP + diphosphate + H(+). It functions in the pathway tRNA modification. In terms of biological role, catalyzes the ATP-dependent 2-thiolation of cytidine in position 32 of tRNA, to form 2-thiocytidine (s(2)C32). The sulfur atoms are provided by the cysteine/cysteine desulfurase (IscS) system. The protein is tRNA-cytidine(32) 2-sulfurtransferase of Idiomarina loihiensis (strain ATCC BAA-735 / DSM 15497 / L2-TR).